Here is a 567-residue protein sequence, read N- to C-terminus: UPF0313 protein Tpet_0582 (567 aa).

Residues 288–560 (KAIETVKFSI…NKMKENVLFK (273 aa)) form the Radical SAM core domain. [4Fe-4S] cluster is bound by residues C303, C307, and C310.

The protein belongs to the UPF0313 family. It depends on [4Fe-4S] cluster as a cofactor.

In Thermotoga petrophila (strain ATCC BAA-488 / DSM 13995 / JCM 10881 / RKU-1), this protein is UPF0313 protein Tpet_0582.